The following is a 178-amino-acid chain: Bryoporin (178 aa).

Phosphocholine contacts are provided by S51, V83, S102, P104, and Y134. The trp-rich region stretch occupies residues 101–117 (WSVPFDYNLYSNWWNIA).

Belongs to the actinoporin family. Plant subfamily.

Inhibited by sphingomyelin. Its function is as follows. Actinoporin-related protein having hemolytic activity in vitro. Binds probably a phosphocholine derivative with the unique amido or hydroxyl groups found in sphingomyelin. Involved in drought tolerance. This chain is Bryoporin, found in Physcomitrium patens (Spreading-leaved earth moss).